An 88-amino-acid chain; its full sequence is UPF0297 protein SGO_2042 (88 aa).

This sequence belongs to the UPF0297 family.

This is UPF0297 protein SGO_2042 from Streptococcus gordonii (strain Challis / ATCC 35105 / BCRC 15272 / CH1 / DL1 / V288).